Consider the following 424-residue polypeptide: Chloroquine resistance transporter (424 aa).

The Cytoplasmic portion of the chain corresponds to M1–K49. The stretch at L50 to N58 is an intramembrane region. Residues I59–L83 traverse the membrane as a helical segment. Over N84–Y89 the chain is Vacuolar. A helical membrane pass occupies residues S90 to L111. The Cytoplasmic segment spans residues F112–F126. The chain crosses the membrane as a helical span at residues N127–G147. The Vacuolar segment spans residues L148–T152. Residues G153 to L173 form a helical membrane-spanning segment. Topologically, residues I174–H180 are cytoplasmic. A helical transmembrane segment spans residues L181–S202. The Vacuolar segment spans residues F203–S210. A helical transmembrane segment spans residues I211–K236. At K237–D241 the chain is on the cytoplasmic side. The helical transmembrane segment at I242 to V263 threads the bilayer. Residues Y264–I279 lie on the Vacuolar side of the membrane. The stretch at W280 to L292 is an intramembrane region. Intrachain disulfides connect C289–C312 and C301–C309. Residues G293–G314 are Vacuolar-facing. The helical transmembrane segment at A315–K339 threads the bilayer. Residues F340–M343 lie on the Cytoplasmic side of the membrane. Residues T344–Y361 form a helical membrane-spanning segment. Residues F362–R374 lie on the Vacuolar side of the membrane. A helical transmembrane segment spans residues L375 to I397. The Cytoplasmic portion of the chain corresponds to L398–Q424.

The protein belongs to the CRT-like transporter family. In terms of assembly, monomer.

It localises to the membrane. The protein localises to the vacuole membrane. It carries out the reaction L-arginine(in) = L-arginine(out). The enzyme catalyses L-lysine(in) = L-lysine(out). It catalyses the reaction L-histidine(out) = L-histidine(in). The catalysed reaction is Fe(3+)(in) = Fe(3+)(out). It carries out the reaction Fe(2+)(in) = Fe(2+)(out). Its function is as follows. Nutrient transporter. Substrate transport is pH-dependent. Can transport arginine, lysine, histidine and peptides. Involved in maintaining the osmotic homeostasis of the digestive vacuole. Required for the normal asexual intraerythrocytic proliferation of parasites. Can transport Fe(2+) and Fe(3+). This is Chloroquine resistance transporter from Plasmodium falciparum (isolate 7G8).